Consider the following 554-residue polypeptide: Movement protein Hsp70h (554 aa).

Belongs to the heat shock protein 70 family.

Its subcellular location is the virion. In terms of biological role, transports viral genome to neighboring plant cells directly through plasmosdesmata, without any budding. The movement protein allows efficient cell to cell propagation, by bypassing the host cell wall barrier. Two movement proteins, p6, Hsp70h and three structural proteins, CP, CPm, and P64 are essential for cell-cell movement. Also plays a role in virion formation. Together with CPm and p64, encapsidates the 5'-terminal portion of the viral genome. This chain is Movement protein Hsp70h, found in Lettuce infectious yellows virus (isolate United States/92) (LIYV).